We begin with the raw amino-acid sequence, 477 residues long: Ankyrin repeat, SAM and basic leucine zipper domain-containing protein 1 (477 aa).

Residues S17, S18, and S20 each carry the phosphoserine modification. ANK repeat units follow at residues 46-76, 80-109, 112-146, 150-179, 183-212, and 216-245; these read EKKE…SVDA, YGWT…NASF, DKQT…DPNV, RLMT…EVNT, NGYT…NKML, and DGKL…PLEG. Positions 274–336 constitute an SAM domain; it reads SYAAFGDLEV…KILTALKELE (63 aa).

As to quaternary structure, interacts with DDX4, PIWIL1, RANBP9 and TDRD1.

Its subcellular location is the cytoplasm. Its function is as follows. Plays a central role during spermatogenesis by repressing transposable elements and preventing their mobilization, which is essential for the germline integrity. Acts via the piRNA metabolic process, which mediates the repression of transposable elements during meiosis by forming complexes composed of piRNAs and Piwi proteins and governs the methylation and subsequent repression of transposons. Its association with pi-bodies suggests a participation in the primary piRNAs metabolic process. Required prior to the pachytene stage to facilitate the production of multiple types of piRNAs, including those associated with repeats involved in the regulation of retrotransposons. May act by mediating protein-protein interactions during germ cell maturation. This is Ankyrin repeat, SAM and basic leucine zipper domain-containing protein 1 (ASZ1) from Ateles geoffroyi (Black-handed spider monkey).